A 134-amino-acid polypeptide reads, in one-letter code: ATP synthase epsilon chain (134 aa).

This sequence belongs to the ATPase epsilon chain family. As to quaternary structure, F-type ATPases have 2 components, CF(1) - the catalytic core - and CF(0) - the membrane proton channel. CF(1) has five subunits: alpha(3), beta(3), gamma(1), delta(1), epsilon(1). CF(0) has three main subunits: a, b and c.

It localises to the cell inner membrane. In terms of biological role, produces ATP from ADP in the presence of a proton gradient across the membrane. This Nitratidesulfovibrio vulgaris (strain DSM 19637 / Miyazaki F) (Desulfovibrio vulgaris) protein is ATP synthase epsilon chain.